Reading from the N-terminus, the 79-residue chain is Small ribosomal subunit protein bS18 (79 aa).

It belongs to the bacterial ribosomal protein bS18 family. As to quaternary structure, part of the 30S ribosomal subunit. Forms a tight heterodimer with protein bS6.

Functionally, binds as a heterodimer with protein bS6 to the central domain of the 16S rRNA, where it helps stabilize the platform of the 30S subunit. This chain is Small ribosomal subunit protein bS18, found in Ureaplasma parvum serovar 3 (strain ATCC 27815 / 27 / NCTC 11736).